A 99-amino-acid chain; its full sequence is Apolipoprotein C-III (99 aa).

The first 20 residues, 1-20, serve as a signal peptide directing secretion; it reads MQPRTLLTVALLALLASARA. Met-63 is subject to Methionine sulfoxide. Residues 68–99 are lipid-binding; it reads RFLKGYWSKFTDKFTGFWDSNPEDQPTPAIES. The O-linked (GalNAc...) threonine glycan is linked to Thr-94.

This sequence belongs to the apolipoprotein C3 family. Post-translationally, the most abundant glycoforms are characterized by an O-linked disaccharide galactose linked to N-acetylgalactosamine (Gal-GalNAc), further modified with up to 3 sialic acid residues. Less abundant glycoforms are characterized by more complex and fucosylated glycan moieties. O-glycosylated on Thr-94 with a core 1 or possibly core 8 glycan.

The protein localises to the secreted. Functionally, component of triglyceride-rich very low density lipoproteins (VLDL) and high density lipoproteins (HDL) in plasma. Plays a multifaceted role in triglyceride homeostasis. Intracellularly, promotes hepatic very low density lipoprotein 1 (VLDL1) assembly and secretion; extracellularly, attenuates hydrolysis and clearance of triglyceride-rich lipoproteins (TRLs). Impairs the lipolysis of TRLs by inhibiting lipoprotein lipase and the hepatic uptake of TRLs by remnant receptors. Formed of several curved helices connected via semiflexible hinges, so that it can wrap tightly around the curved micelle surface and easily adapt to the different diameters of its natural binding partners. The polypeptide is Apolipoprotein C-III (Apoc3) (Mus musculus (Mouse)).